The following is a 228-amino-acid chain: Urease accessory protein UreG (228 aa).

34–41 (GPVGSGKT) contacts GTP.

Belongs to the SIMIBI class G3E GTPase family. UreG subfamily. In terms of assembly, homodimer. UreD, UreF and UreG form a complex that acts as a GTP-hydrolysis-dependent molecular chaperone, activating the urease apoprotein by helping to assemble the nickel containing metallocenter of UreC. The UreE protein probably delivers the nickel.

It localises to the cytoplasm. In terms of biological role, facilitates the functional incorporation of the urease nickel metallocenter. This process requires GTP hydrolysis, probably effectuated by UreG. In Rhodococcus opacus (strain B4), this protein is Urease accessory protein UreG.